The primary structure comprises 535 residues: Pescadillo homolog (535 aa).

The region spanning 314-406 (KRKQLFANYR…SCLSIKKYLP (93 aa)) is the BRCT domain.

This sequence belongs to the pescadillo family.

It is found in the nucleus. It localises to the nucleolus. Its subcellular location is the nucleoplasm. Functionally, required for maturation of ribosomal RNAs and formation of the large ribosomal subunit. This Brugia malayi (Filarial nematode worm) protein is Pescadillo homolog.